Consider the following 249-residue polypeptide: DNA repair protein RecO (249 aa).

The protein belongs to the RecO family.

In terms of biological role, involved in DNA repair and RecF pathway recombination. This is DNA repair protein RecO from Mycoplasma capricolum subsp. capricolum (strain California kid / ATCC 27343 / NCTC 10154).